A 1179-amino-acid chain; its full sequence is Integrin alpha-7 (1179 aa).

The first 33 residues, 1–33 (MARIPRCDFLRPPGIYYLITSLLAGLFLPPAIA), serve as a signal peptide directing secretion. The Extracellular segment spans residues 34–1076 (FNLDVMGAIR…YLDPMAVVVE (1043 aa)). 7 FG-GAP repeats span residues 38 to 103 (VMGA…ETDC), 110 to 175 (RGAN…IRDE), 185 to 238 (EGRP…SPDL), 292 to 349 (DRLT…ATRL), 350 to 411 (IPEV…HWAD), 412 to 467 (ISPL…GVVV), and 471 to 530 (QVLE…IDPR). Asn-86 is a glycosylation site (N-linked (GlcNAc...) asparagine). 3 disulfide bridges follow: Cys-94–Cys-103, Cys-140–Cys-163, and Cys-184–Cys-197. The Ca(2+) site is built by Asp-372, Asn-374, Asp-376, Asp-380, Asp-434, Asn-436, Asp-438, Asp-442, Asp-492, Asp-494, Asn-496, Tyr-498, and Asp-500. 6 disulfides stabilise this stretch: Cys-539–Cys-546, Cys-552–Cys-615, Cys-681–Cys-687, Cys-781–Cys-792, Cys-939–Cys-993, and Cys-999–Cys-1004. The N-linked (GlcNAc...) asparagine glycan is linked to Asn-784. Residues 952 to 961 (SRDRRRRELG) are compositionally biased toward basic and acidic residues. Residues 952–978 (SRDRRRRELGQPEPQEPPEKVEPSTSW) are disordered. Asn-988 carries N-linked (GlcNAc...) asparagine glycosylation. 2 N-linked (GlcNAc...) asparagine glycosylation sites follow: Asn-1023 and Asn-1043. Residues 1077-1102 (GVPWWVILLGVLAGLLVLALLVLLLW) form a helical membrane-spanning segment. Over 1103 to 1179 (KLGFFKRAKH…PDGHPVPATA (77 aa)) the chain is Cytoplasmic. Positions 1105–1109 (GFFKR) match the GFFKR motif motif. The disordered stretch occupies residues 1134–1153 (KEEKTGTIQRSNWGNSQWEG). Residues 1139–1152 (GTIQRSNWGNSQWE) show a composition bias toward polar residues. 3 repeat units span residues 1155–1158 (DAHP), 1163–1166 (DWHP), and 1171–1174 (DGHP). The tract at residues 1155–1174 (DAHPILAADWHPELGPDGHP) is 3 X 4 AA repeats of D-X-H-P.

This sequence belongs to the integrin alpha chain family. As to quaternary structure, heterodimer of an alpha and a beta subunit. The alpha subunit is composed of a heavy and a light chain linked by a disulfide bond. Alpha-7 associates with beta-1. Interacts with COMP. Interacts (via C-terminus intracellular tail region) with CIB1; the interaction is stabilized/increased in a calcium- and magnesium-dependent manner. Post-translationally, ADP-ribosylated on at least two sites of the extracellular domain in skeletal myotubes (in vitro). In terms of processing, no proteolytic cleavage to produce the 70 kDa form is seen due to the presence of a Gly instead of an arginine residue at position 647. As to expression, isoforms containing segment X2 are found in adult heart, lung and skeletal muscle. Isoforms containing segment X1 are expressed in adult heart, lung and in proliferating skeletal myoblasts but not in adult skeletal muscle. Isoforms containing segment a are exclusively found in skeletal muscle. Isoforms containing segment B are widely expressed. In muscle fibers isoforms containing segment A and B are expressed at myotendinous and neuromuscular junctions; isoforms containing segment C are expressed at neuromuscular junctions and at extrasynaptic sites.

It localises to the membrane. Integrin alpha-7/beta-1 is the primary laminin receptor on skeletal myoblasts and adult myofibers. During myogenic differentiation, it may induce changes in the shape and mobility of myoblasts, and facilitate their localization at laminin-rich sites of secondary fiber formation. Involved in the maintenance of the myofibers cytoarchitecture as well as for their anchorage, viability and functional integrity. Mice carrying a ITGA7 null allele are viable and fertile, but show progressive muscular dystrophy starting soon after birth, but with a distinct variability in different muscle types. Required to promote contractile phenotype acquisition in differentiated airway smooth muscle (ASM) cells. Acts as a Schwann cell receptor for laminin-2. Acts as a receptor of COMP and mediates its effect on vascular smooth muscle cells (VSMCs) maturation. The polypeptide is Integrin alpha-7 (Itga7) (Mus musculus (Mouse)).